Reading from the N-terminus, the 243-residue chain is Carboxy-S-adenosyl-L-methionine synthase (243 aa).

S-adenosyl-L-methionine contacts are provided by residues tyrosine 40, 65-67 (GCS), 90-91 (DN), 118-119 (DI), asparagine 133, and arginine 200.

Belongs to the class I-like SAM-binding methyltransferase superfamily. Cx-SAM synthase family. Homodimer.

The catalysed reaction is prephenate + S-adenosyl-L-methionine = carboxy-S-adenosyl-L-methionine + 3-phenylpyruvate + H2O. Functionally, catalyzes the conversion of S-adenosyl-L-methionine (SAM) to carboxy-S-adenosyl-L-methionine (Cx-SAM). This Shewanella oneidensis (strain ATCC 700550 / JCM 31522 / CIP 106686 / LMG 19005 / NCIMB 14063 / MR-1) protein is Carboxy-S-adenosyl-L-methionine synthase.